Consider the following 367-residue polypeptide: Probable ATP-dependent RNA helicase MJ0669 (367 aa).

The Q motif signature appears at 6–34 (MNFNELNLSDNILNAIRNKGFEKPTDIQM). Residues 38–206 (PLFLNDEYNI…KKYMGDYSFI (169 aa)) form the Helicase ATP-binding domain. 51–58 (ARTGSGKT) lines the ATP pocket. A DEAD box motif is present at residues 154-157 (DEAD). In terms of domain architecture, Helicase C-terminal spans 213-367 (NIEQSYVEVN…KLKIKKLKFG (155 aa)).

Belongs to the DEAD box helicase family. In terms of assembly, homodimer.

The catalysed reaction is ATP + H2O = ADP + phosphate + H(+). The chain is Probable ATP-dependent RNA helicase MJ0669 from Methanocaldococcus jannaschii (strain ATCC 43067 / DSM 2661 / JAL-1 / JCM 10045 / NBRC 100440) (Methanococcus jannaschii).